The sequence spans 346 residues: DNA-directed RNA polymerase subunit alpha (346 aa).

The tract at residues 1–233 (MLRDEVAVSA…DLFIPFLHAE (233 aa)) is alpha N-terminal domain (alpha-NTD). An alpha C-terminal domain (alpha-CTD) region spans residues 268–346 (IELKCIFIDQ…NKFLIGNPSE (79 aa)).

The protein belongs to the RNA polymerase alpha chain family. In plastids the minimal PEP RNA polymerase catalytic core is composed of four subunits: alpha, beta, beta', and beta''. When a (nuclear-encoded) sigma factor is associated with the core the holoenzyme is formed, which can initiate transcription.

The protein localises to the plastid. It is found in the chloroplast. The catalysed reaction is RNA(n) + a ribonucleoside 5'-triphosphate = RNA(n+1) + diphosphate. DNA-dependent RNA polymerase catalyzes the transcription of DNA into RNA using the four ribonucleoside triphosphates as substrates. This Ranunculus macranthus (Large buttercup) protein is DNA-directed RNA polymerase subunit alpha.